The sequence spans 501 residues: Dye-decolorizing peroxidase (501 aa).

The signal sequence occupies residues 1 to 21; it reads MRLSPSFLSLALVIFVGEVVA. Residues 22–60 constitute a propeptide that is removed on maturation; the sequence is RNVVARASNPASVTGTRKVSLLKNVAGLPAVPTAQQVAV. Catalysis depends on Asp228, which acts as the Proton acceptor. Residue Asn352 is glycosylated (N-linked (GlcNAc...) asparagine). His367 contacts heme. N-linked (GlcNAc...) asparagine glycosylation is present at Asn403.

Belongs to the DyP-type peroxidase family. Heme b serves as cofactor.

Its subcellular location is the secreted. The enzyme catalyses Reactive Blue 5 + 2 H2O2 = 2,2'-disulfonyl azobenzene + 3-[(4-amino-6-chloro-1,3,5-triazin-2-yl)amino]benzenesulfonate + phthalate + 2 H2O + 2 H(+). It carries out the reaction 2 a phenolic donor + H2O2 = 2 a phenolic radical donor + 2 H2O. Its function is as follows. Manganese-independent peroxidase that is able to convert a large number of compounds, but its physiological substrate is not known. In addition to classic peroxidase substrates (e.g. 2,6-dimethoxyphenol), oxidizes dyes such as Reactive Blue 5 and Reactive Black 5. The polypeptide is Dye-decolorizing peroxidase (Exidia glandulosa (Black witch's butter)).